Here is a 409-residue protein sequence, read N- to C-terminus: Phosphoserine phosphatase SerB2 (409 aa).

2 consecutive ACT domains span residues 8–86 (LITV…RSDD) and 102–174 (GRPI…DYGL). Aspartate 185 acts as the Nucleophile in catalysis. Mg(2+)-binding residues include aspartate 185 and aspartate 187. Aspartate 187 acts as the Proton donor in catalysis. Residues glutamate 194, arginine 230, 273-274 (SG), and lysine 318 contribute to the substrate site. Residue aspartate 341 coordinates Mg(2+). Position 344 (asparagine 344) interacts with substrate.

This sequence belongs to the HAD-like hydrolase superfamily. SerB family. As to quaternary structure, homodimer. The dimeric population shifts to a tetramer in the presence of L-serine, which inactivates the enzyme. Mg(2+) serves as cofactor. Mn(2+) is required as a cofactor.

The protein resides in the secreted. The protein localises to the host cytoplasm. It is found in the host cytosol. The catalysed reaction is O-phospho-L-serine + H2O = L-serine + phosphate. It catalyses the reaction O-phospho-D-serine + H2O = D-serine + phosphate. It carries out the reaction O-phospho-L-seryl-[protein] + H2O = L-seryl-[protein] + phosphate. The enzyme catalyses O-phospho-L-threonyl-[protein] + H2O = L-threonyl-[protein] + phosphate. It participates in amino-acid biosynthesis; L-serine biosynthesis; L-serine from 3-phospho-D-glycerate: step 3/3. Its activity is regulated as follows. Clofazimine, a drug being evaluated for XDR and MDR tuberculosis, inhibits SerB2 phosphatase activity and reverses the various functional effects described above and interactions with host proteins. Is inhibited by known PSP inhibitors such as chlorpromazine, DL-AP3 and sodium orthovanadate, but not by okadaic acid. By binding to the ACT domains, amino-acids have various effects on enzyme activity: L-serine and L-glycine act as inhibitors, whereas L-lysine, L-tyrosine and L-phenylalanine are activators. High throughput screen has been performed to identify specific PSP inhibitors with activity against intracellular bacteria; the two best hits identified in this screen, clorobiocin and rosaniline, are bactericidal and kill bacteria in infected macrophages in a dose-dependent manner. In terms of biological role, catalyzes the dephosphorylation of O-phospho-L-serine into L-serine, a step in the L-serine biosynthetic pathway. Exhibits high specificity for L-phosphoserine compared to substrates like L-phosphothreonine (5% relative activity) and L-phosphotyrosine (1.7% relative activity). Functionally, in the host, induces significant cytoskeleton rearrangements through cofilin dephosphorylation and its subsequent activation, and affects the expression of genes that regulate actin dynamics. It specifically interacts with HSP90, HSP70 and HSP27 that block apoptotic pathways but not with other HSPs. Also interacts with GAPDH. It actively dephosphorylates MAP kinase p38 and NF-kappa B p65 (specifically at Ser-536) that play crucial roles in inflammatory and immune responses. This in turn leads to down-regulation of Interleukin 8, a chemotactic and inflammatory cytokine. Thus might help the pathogen to evade the host's immune response. Exogenous addition of purified SerB2 protein to human THP-1 cells (that can be differentiated into macrophage-like cells) induces microtubule rearrangements; the phosphatase activity is co-related to the elicited rearrangements, while addition of the ACT-domains alone elicits no rearrangements. The polypeptide is Phosphoserine phosphatase SerB2 (Mycobacterium tuberculosis (strain ATCC 25618 / H37Rv)).